We begin with the raw amino-acid sequence, 759 residues long: NADP-dependent malic enzyme (759 aa).

Positions 1–428 (MDEQLKQSAL…KLTEFVYKTN (428 aa)) are malic enzyme. Tyrosine 39 functions as the Proton donor in the catalytic mechanism. Lysine 94 acts as the Proton acceptor in catalysis. Residues glutamate 136, aspartate 137, and aspartate 162 each coordinate a divalent metal cation. Residues 195-198 (AGAA), asparagine 288, and asparagine 320 contribute to the NADP(+) site. A phosphate acetyltransferase region spans residues 429–759 (LFMKPIFSQA…AVVEAQTTPL (331 aa)).

In the N-terminal section; belongs to the malic enzymes family. It in the C-terminal section; belongs to the phosphate acetyltransferase and butyryltransferase family. It depends on Mg(2+) as a cofactor. The cofactor is Mn(2+).

The catalysed reaction is (S)-malate + NADP(+) = pyruvate + CO2 + NADPH. The enzyme catalyses oxaloacetate + H(+) = pyruvate + CO2. This chain is NADP-dependent malic enzyme (maeB), found in Salmonella typhimurium (strain LT2 / SGSC1412 / ATCC 700720).